We begin with the raw amino-acid sequence, 534 residues long: Bifunctional pantoate ligase/cytidylate kinase (534 aa).

Residues 1–302 (MRLLTTVAAL…LGSTRLIDNT (302 aa)) form a pantoate--beta-alanine ligase region. 48 to 55 (MGSLHQGH) is a binding site for ATP. Catalysis depends on histidine 55, which acts as the Proton donor. Position 79 (glutamine 79) interacts with (R)-pantoate. Glutamine 79 is a binding site for beta-alanine. Residue 172–175 (GQKD) coordinates ATP. Residue glutamine 178 participates in (R)-pantoate binding. ATP-binding positions include valine 201 and 209–212 (CSSR). The cytidylate kinase stretch occupies residues 303-534 (ILRDRQPIIA…DYYQQRLSQW (232 aa)).

The protein in the N-terminal section; belongs to the pantothenate synthetase family. This sequence in the C-terminal section; belongs to the cytidylate kinase family. Type 1 subfamily.

It is found in the cytoplasm. It carries out the reaction (R)-pantoate + beta-alanine + ATP = (R)-pantothenate + AMP + diphosphate + H(+). The enzyme catalyses CMP + ATP = CDP + ADP. The catalysed reaction is dCMP + ATP = dCDP + ADP. It participates in cofactor biosynthesis; (R)-pantothenate biosynthesis; (R)-pantothenate from (R)-pantoate and beta-alanine: step 1/1. In terms of biological role, catalyzes the condensation of pantoate with beta-alanine in an ATP-dependent reaction via a pantoyl-adenylate intermediate. Functionally, catalyzes the transfer of a phosphate group from ATP to either CMP or dCMP to form CDP or dCDP and ADP, respectively. This is Bifunctional pantoate ligase/cytidylate kinase from Nostoc sp. (strain PCC 7120 / SAG 25.82 / UTEX 2576).